The primary structure comprises 30 residues: Snaclec carinactivase-1 regulatory subunit 14 kDa chain (30 aa).

Residues 1–30 form the C-type lectin domain; the sequence is DCLPDWFHYEGHCYRVFDEPKKWADAEKFC. A disulfide bond links cysteine 2 and cysteine 13.

This sequence belongs to the snaclec family. Heterodimer of a metalloproteinase subunit and a regulatory subunit comprising two polypeptides disulfide-linked (14 kDa and 17 kDa chains). In terms of tissue distribution, expressed by the venom gland.

It localises to the secreted. Functionally, calcium-dependent prothrombin activator. This protein may activate prothrombin via recognition by the regulatory subunit of the calcium ion bound conformation of its gamma-carboxyglutamic acid (GLA) domain, and the subsequent conversion of prothrombin to active thrombin is catalyzed by the catalytic subunit. In Echis carinatus (Saw-scaled viper), this protein is Snaclec carinactivase-1 regulatory subunit 14 kDa chain.